The primary structure comprises 431 residues: Levansucrase Lscbeta (431 aa).

5 residues coordinate sucrose: W61, D62, A148, R218, and D219. The active-site Nucleophile is D62. E303 serves as the catalytic Proton donor/acceptor.

Belongs to the glycosyl hydrolase 68 family. In terms of assembly, homodimer.

The enzyme catalyses [6)-beta-D-fructofuranosyl-(2-&gt;](n) alpha-D-glucopyranoside + sucrose = [6)-beta-D-fructofuranosyl-(2-&gt;](n+1) alpha-D-glucopyranoside + D-glucose. With respect to regulation, sucrose hydrolase activity is negatively affected by salt concentration. The levan polymerization rate is constant regardless of sucrose concentration. Its function is as follows. Catalyzes the synthesis of levan, a fructose polymer, by transferring the fructosyl moiety from sucrose to a growing acceptor molecule. Also displays sucrose hydrolase activity. This chain is Levansucrase Lscbeta, found in Pseudomonas syringae pv. actinidiae.